The primary structure comprises 891 residues: Microtubule-associated protein 10 (891 aa).

Disordered regions lie at residues 325 to 355 (AAVQ…PPQI), 401 to 457 (EDKG…VTKG), 504 to 679 (SWKG…KSSC), and 702 to 844 (TTEN…SNLS). Residues 407–417 (PSTKSTSPSES) show a composition bias toward low complexity. Polar residues-rich tracts occupy residues 509–520 (VSSSAAESQMSP) and 527–544 (PTDS…SQLP). Basic and acidic residues-rich tracts occupy residues 577–592 (STTK…KQEM) and 645–658 (TVDK…DGRQ). 5 stretches are compositionally biased toward polar residues: residues 665–679 (ADTS…KSSC), 702–718 (TTEN…SSTG), 726–749 (SRAS…SSVL), 776–790 (EASS…SQWT), and 826–844 (KSQS…SNLS).

In terms of assembly, interacts (via middle region) with microtubules.

The protein localises to the cytoplasm. It is found in the cytoskeleton. It localises to the spindle pole. Its subcellular location is the microtubule organizing center. The protein resides in the centrosome. The protein localises to the midbody. Its function is as follows. Microtubule-associated protein (MAP) that plays a role in the regulation of cell division; promotes microtubule stability and participates in the organization of the spindle midzone and normal progress of cytokinesis. This is Microtubule-associated protein 10 (Map10) from Mus musculus (Mouse).